A 593-amino-acid polypeptide reads, in one-letter code: ETS-related transcription factor Elf-2 (593 aa).

Position 107 is a phosphoserine (Ser107). Residues 146–201 (VEVSTEESEPMDTSPIPTSPDSHEPMKKKKVGRKPKTQQSPISNGSPELGIKKKPR) form a disordered region. The span at 171-181 (MKKKKVGRKPK) shows a compositional bias: basic residues. Thr182 bears the Phosphothreonine mark. The span at 182 to 191 (TQQSPISNGS) shows a compositional bias: polar residues. Phosphoserine is present on residues Ser185 and Ser191. Positions 208 to 290 (TYLWEFLLDL…EGQRLVYQFK (83 aa)) form a DNA-binding region, ETS. Residues Ser363 and Ser372 each carry the phosphoserine modification. Thr376 is modified (phosphothreonine). Ser430 bears the Phosphoserine mark. Residue Arg494 is modified to Omega-N-methylarginine. Position 521 is a phosphothreonine (Thr521). Lys536 participates in a covalent cross-link: Glycyl lysine isopeptide (Lys-Gly) (interchain with G-Cter in SUMO2).

This sequence belongs to the ETS family. In terms of assembly, interacts with the LIM domains of LMO2. Interacts via its N-terminal region with RUNX1. Expressed in all fetal and adult tissues examined. Among fetal tissues, highest levels of expression detected in heart, lung, liver and kidney, and lower levels in brain. Among adult tissues, highest levels of expression detected in heart, placenta, lung, skeletal muscle, spleen, thymus, testis and ovary. Moderate expression in prostate, small intestine, kidney, liver and pancreas, and weak expression in colon, brain and peripheral blood lymphocytes.

The protein resides in the nucleus. Isoform 1 transcriptionally activates the LYN and BLK promoters and acts synergistically with RUNX1 to transactivate the BLK promoter. Its function is as follows. Isoform 2 may function in repression of RUNX1-mediated transactivation. This Homo sapiens (Human) protein is ETS-related transcription factor Elf-2.